We begin with the raw amino-acid sequence, 158 residues long: Ribosome maturation factor RimP (158 aa).

It belongs to the RimP family.

It is found in the cytoplasm. Functionally, required for maturation of 30S ribosomal subunits. The protein is Ribosome maturation factor RimP of Lactobacillus gasseri (strain ATCC 33323 / DSM 20243 / BCRC 14619 / CIP 102991 / JCM 1131 / KCTC 3163 / NCIMB 11718 / NCTC 13722 / AM63).